The following is a 491-amino-acid chain: Ketol-acid reductoisomerase (NADP(+)) (491 aa).

The KARI N-terminal Rossmann domain occupies 15–208 (AQLGKCRFMG…GGHRAGVLES (194 aa)). Residues 45-48 (CGAQ), R68, R76, S78, and 108-110 (DKQ) contribute to the NADP(+) site. H132 is a catalytic residue. Residue G158 coordinates NADP(+). KARI C-terminal knotted domains follow at residues 209–344 (SFVA…TAPQ) and 345–484 (YEGK…MTDM). Positions 217, 221, 389, and 393 each coordinate Mg(2+). S414 provides a ligand contact to substrate.

It belongs to the ketol-acid reductoisomerase family. Mg(2+) is required as a cofactor.

It carries out the reaction (2R)-2,3-dihydroxy-3-methylbutanoate + NADP(+) = (2S)-2-acetolactate + NADPH + H(+). The enzyme catalyses (2R,3R)-2,3-dihydroxy-3-methylpentanoate + NADP(+) = (S)-2-ethyl-2-hydroxy-3-oxobutanoate + NADPH + H(+). It functions in the pathway amino-acid biosynthesis; L-isoleucine biosynthesis; L-isoleucine from 2-oxobutanoate: step 2/4. It participates in amino-acid biosynthesis; L-valine biosynthesis; L-valine from pyruvate: step 2/4. Involved in the biosynthesis of branched-chain amino acids (BCAA). Catalyzes an alkyl-migration followed by a ketol-acid reduction of (S)-2-acetolactate (S2AL) to yield (R)-2,3-dihydroxy-isovalerate. In the isomerase reaction, S2AL is rearranged via a Mg-dependent methyl migration to produce 3-hydroxy-3-methyl-2-ketobutyrate (HMKB). In the reductase reaction, this 2-ketoacid undergoes a metal-dependent reduction by NADPH to yield (R)-2,3-dihydroxy-isovalerate. In Shigella dysenteriae serotype 1 (strain Sd197), this protein is Ketol-acid reductoisomerase (NADP(+)).